The sequence spans 177 residues: Bifunctional protein PyrR (177 aa).

The PRPP-binding motif lies at 99 to 111 (VVLVDDVLYTGRT).

This sequence belongs to the purine/pyrimidine phosphoribosyltransferase family. PyrR subfamily. Homodimer and homohexamer; in equilibrium.

It carries out the reaction UMP + diphosphate = 5-phospho-alpha-D-ribose 1-diphosphate + uracil. In terms of biological role, regulates transcriptional attenuation of the pyrimidine nucleotide (pyr) operon by binding in a uridine-dependent manner to specific sites on pyr mRNA. This disrupts an antiterminator hairpin in the RNA and favors formation of a downstream transcription terminator, leading to a reduced expression of downstream genes. Also displays a weak uracil phosphoribosyltransferase activity which is not physiologically significant. The polypeptide is Bifunctional protein PyrR (Clostridioides difficile (strain 630) (Peptoclostridium difficile)).